Reading from the N-terminus, the 2527-residue chain is Highly reducing polyketide synthase poxF (2527 aa).

A Ketosynthase family 3 (KS3) domain is found at 20–445 (VMPIAIIGMA…GANAHVIVES (426 aa)). Catalysis depends on for beta-ketoacyl synthase activity residues Cys193, His328, and His368. The malonyl-CoA:ACP transacylase (MAT) domain stretch occupies residues 560–882 (VFTGQGAQWF…TYASCLSRGQ (323 aa)). Residues 951–1086 (HDLLGVPAAG…GLCCTPSPAQ (136 aa)) form an N-terminal hotdog fold region. The tract at residues 951–1243 (HDLLGVPAAG…SVRVINNAGT (293 aa)) is dehydratase (DH) domain. One can recognise a PKS/mFAS DH domain in the interval 951-1270 (HDLLGVPAAG…CQSLGSSAVV (320 aa)). His983 acts as the Proton acceptor; for dehydratase activity in catalysis. The interval 1108–1270 (AWRILNPADT…CQSLGSSAVV (163 aa)) is C-terminal hotdog fold. The Proton donor; for dehydratase activity role is filled by Asp1174. The methyltransferase (CMet) domain stretch occupies residues 1406 to 1587 (EDQAEWSSVS…RLLAKAGFEP (182 aa)). Residues 1823-2137 (GLLNSLVFTE…TGKHMGKIVL (315 aa)) are enoyl reductase (ER) (ER) domain. Residues 2162 to 2339 (TYLLVGGVGG…AVSIDLGMVS (178 aa)) are ketoreductase (KR) domain. In terms of domain architecture, Carrier spans 2445–2522 (EVTTLIQSAL…GLAGQMAKKS (78 aa)). Ser2482 is modified (O-(pantetheine 4'-phosphoryl)serine).

The protein operates within secondary metabolite biosynthesis. Highly reducing polyketide synthase; part of the gene cluster that mediates the biosynthesis of oxaleimides, cytotoxic compounds containing an unusual disubstituted succinimide moiety. The first step of the pathway is provided by the HR-PKS poxF that serves in a new mode of collaborative biosynthesis with the PKS-NRPS poxE, by providing the olefin containing amino acid substrate via the synthesis of an ACP-bound dec-4-enoate. The cytochrome P450 monooxygenase poxM-catalyzed oxidation at the alpha-position creates the enzyme-bound 2-hydroxydec-4-enoyl-ACP thioester, which may be prone to spontaneous hydrolysis to yield 2-hydroxydec-4-enoic acid due to increased electrophilicity of the carbonyl. 2-hydroxydec-4-enoic acid can then be further oxidized by poxM to yield the alpha-ketoacid 2-oxodec-4-enoicacid, which is reductively aminated by the aminotransferase poxL to yield (S,E)-2-aminodec-4-enoic acid. The Hybrid PKS-NRPS synthetase poxE then performs condensation between the octaketide product of its PKS modules and the amino group of (S,E)-2-aminodec-4-enoic acid which is activated and incorporated by the adenylation domain. The resulting aminoacyl product can be cyclized by the Diels-Alderase PoxQ and reductively released by the reductive (R) domain of poxE to yield an aldehyde intermediate. The released aldehyde is then substrate for a Knoevenagel condensation by the hydrolyase poxO followed by an oxidation at the 5-position of the pyrrolidone ring. The presence of the olefin from the amino acid building block allows for migration of the substituted allyl group to occur. This allylic transposition reaction takes place in a conjugate addition, semipinacol-like fashion to yield a succinimide intermediate. Iterative two-electron oxidations of the C7 methyl of the succinimide intermediate to the carboxylic acid can be catalyzed by one of two remaining cytochrome P450 monooxygenasess poxC or poxD to yield oxaleimide A. Subsequent oxidation yields the maleimide scaffold oxaleimide I. Both oxaleimide A and oxaleimide I can undergo oxidative modifications in the decalin ring to yield the series of products oxaleimides B to H. This is Highly reducing polyketide synthase poxF from Penicillium oxalicum.